A 276-amino-acid polypeptide reads, in one-letter code: MKISVKLIKELRIKTGSGYLECKRALQKSNGNIINAINYLRIVGTDIAQRKVLRKTKFGRIFSYCSKNLGVLLELTSETDFVSKNEEFKNFGEKIVNFSGNNKIFDLTEINEIFNSKKINFISRVRENIEINKIKYITGNIIESYQHLGKIGVIISGKMLSPNTHLNTTKCFKNIAMHVAAAAPLYLSELDIPNNVLQKETDIQKSIAKKTGKSSKILQAIIKGRLKKFISEITLINQNFIINPKITIHDYLKENQVWINNFIRLQVGENIDNLNT.

The interval 79–82 is involved in Mg(2+) ion dislocation from EF-Tu; sequence TDFV.

It belongs to the EF-Ts family.

It localises to the cytoplasm. In terms of biological role, associates with the EF-Tu.GDP complex and induces the exchange of GDP to GTP. It remains bound to the aminoacyl-tRNA.EF-Tu.GTP complex up to the GTP hydrolysis stage on the ribosome. This is Elongation factor Ts from Buchnera aphidicola subsp. Cinara cedri (strain Cc).